We begin with the raw amino-acid sequence, 198 residues long: Nucleoside triphosphate pyrophosphatase (198 aa).

The Proton acceptor role is filled by aspartate 72.

This sequence belongs to the Maf family. It depends on a divalent metal cation as a cofactor.

It is found in the cytoplasm. It catalyses the reaction a ribonucleoside 5'-triphosphate + H2O = a ribonucleoside 5'-phosphate + diphosphate + H(+). The enzyme catalyses a 2'-deoxyribonucleoside 5'-triphosphate + H2O = a 2'-deoxyribonucleoside 5'-phosphate + diphosphate + H(+). Functionally, nucleoside triphosphate pyrophosphatase. May have a dual role in cell division arrest and in preventing the incorporation of modified nucleotides into cellular nucleic acids. This chain is Nucleoside triphosphate pyrophosphatase, found in Corynebacterium aurimucosum (strain ATCC 700975 / DSM 44827 / CIP 107346 / CN-1) (Corynebacterium nigricans).